The chain runs to 336 residues: 7,8-didemethyl-8-hydroxy-5-deazariboflavin synthase (336 aa).

Residues 18–249 (ITYSPAYTLV…TSIAIQVPPN (232 aa)) form the Radical SAM core domain. The [4Fe-4S] cluster site is built by Cys-32, Cys-36, and Cys-39.

The protein belongs to the radical SAM superfamily. CofG family. Consists of two subunits, CofG and CofH. It depends on [4Fe-4S] cluster as a cofactor.

The enzyme catalyses 5-amino-5-(4-hydroxybenzyl)-6-(D-ribitylimino)-5,6-dihydrouracil + S-adenosyl-L-methionine = 7,8-didemethyl-8-hydroxy-5-deazariboflavin + 5'-deoxyadenosine + L-methionine + NH4(+) + H(+). Its pathway is cofactor biosynthesis; coenzyme F0 biosynthesis. Functionally, catalyzes the radical-mediated synthesis of 7,8-didemethyl-8-hydroxy-5-deazariboflavin from 5-amino-5-(4-hydroxybenzyl)-6-(D-ribitylimino)-5,6-dihydrouracil. This chain is 7,8-didemethyl-8-hydroxy-5-deazariboflavin synthase, found in Synechococcus elongatus (strain ATCC 33912 / PCC 7942 / FACHB-805) (Anacystis nidulans R2).